We begin with the raw amino-acid sequence, 280 residues long: MPVRILKPRTPGTRFFSYPSFEEITTDKPEKSLLVPNKSTGGRNNNGRVTSRHMGGGHKRYYRIIDFKRNKDGIPAKVATIEYDPNRTARIALLSYADGEKRYILAPNGIKVGDLIECGPEADIKVGNALPLKNIPVGIEVHNIEMRPGKGGQMARSAGSYAVLVAKEGDYATLKMPSGELRKVRVECKATVGVIGNLEHENLSLGKAGRSRWLGIRPQTRGMAMNPVDHPMGGGEGKSKSGGGRKHPKSPWGQKSKGLKTRKRKKASSKLIVRRRDSKK.

Disordered stretches follow at residues 32-54 and 221-280; these read SLLV…SRHM and RGMA…DSKK. The segment covering 37 to 49 has biased composition (polar residues); it reads NKSTGGRNNNGRV. The span at 232–242 shows a compositional bias: gly residues; the sequence is MGGGEGKSKSG. Residues 257-280 are compositionally biased toward basic residues; sequence KGLKTRKRKKASSKLIVRRRDSKK.

It belongs to the universal ribosomal protein uL2 family. Part of the 50S ribosomal subunit. Forms a bridge to the 30S subunit in the 70S ribosome.

Its function is as follows. One of the primary rRNA binding proteins. Required for association of the 30S and 50S subunits to form the 70S ribosome, for tRNA binding and peptide bond formation. It has been suggested to have peptidyltransferase activity; this is somewhat controversial. Makes several contacts with the 16S rRNA in the 70S ribosome. The protein is Large ribosomal subunit protein uL2 of Chloroherpeton thalassium (strain ATCC 35110 / GB-78).